We begin with the raw amino-acid sequence, 1265 residues long: Protein FAM193A (1265 aa).

Positions 107-142 (SEDTYSTLLQRYQRSEEELRRVAEEWLECQKRIDAY) form a coiled coil. The tract at residues 247–272 (APDYLAERSPPSVSSASSGSGSSSPI) is disordered. The span at 255 to 271 (SPPSVSSASSGSGSSSP) shows a compositional bias: low complexity. S293 carries the post-translational modification Phosphoserine. Disordered regions lie at residues 331 to 407 (NGGG…EQAP), 553 to 586 (GSEI…SKEK), 626 to 674 (VQSS…APLP), 750 to 785 (ENGV…NQKE), 822 to 841 (LTKR…ERES), 859 to 881 (ETKP…KLEE), and 893 to 1163 (EHLH…DRVN). A compositionally biased stretch (acidic residues) spans 355-365 (EADDEEADGES). S383 carries the phosphoserine modification. Position 642 is a phosphoserine (S642). A compositionally biased stretch (acidic residues) spans 757-769 (QQDDGDESADEDS). The span at 772–781 (EHSSSTSTST) shows a compositional bias: low complexity. The segment covering 868-877 (AAKRARHKQR) has biased composition (basic residues). Residues 873–932 (RHKQRKLEEKARLEAEARAREHLHLQEEQRRREEEEDEEEEEDRFKEEFQRLQELQKLRA) adopt a coiled-coil conformation. Basic and acidic residues-rich tracts occupy residues 893 to 905 (EHLH…RRRE) and 915 to 929 (DRFK…ELQK). Residues 931 to 940 (RAVKKKKKER) show a composition bias toward basic residues. Positions 953–973 (RNFQAATESVPNSGNIHNGSL) are enriched in polar residues. The stretch at 1093-1118 (TEQKREERKVNSNNNNKKQLNHIKDE) forms a coiled coil. Phosphoserine is present on residues S1129 and S1144. Over residues 1149–1159 (GKNKKNKKKKG) the composition is skewed to basic residues.

It belongs to the FAM193 family.

This chain is Protein FAM193A (FAM193A), found in Homo sapiens (Human).